The primary structure comprises 190 residues: Segregation and condensation protein B (190 aa).

Belongs to the ScpB family. Homodimer. Homodimerization may be required to stabilize the binding of ScpA to the Smc head domains. Component of a cohesin-like complex composed of ScpA, ScpB and the Smc homodimer, in which ScpA and ScpB bind to the head domain of Smc. The presence of the three proteins is required for the association of the complex with DNA.

The protein localises to the cytoplasm. Functionally, participates in chromosomal partition during cell division. May act via the formation of a condensin-like complex containing Smc and ScpA that pull DNA away from mid-cell into both cell halves. The sequence is that of Segregation and condensation protein B from Alkaliphilus metalliredigens (strain QYMF).